Here is a 204-residue protein sequence, read N- to C-terminus: Large ribosomal subunit protein eL15 (204 aa).

Disordered stretches follow at residues 71-91 (RKRP…GVNQ) and 159-182 (REMR…HYSQ). Over residues 159–174 (REMRGKTSAGRKHRGL) the composition is skewed to basic residues.

This sequence belongs to the eukaryotic ribosomal protein eL15 family.

This Faxonius limosus (Spinycheek crayfish) protein is Large ribosomal subunit protein eL15 (RPL15).